The following is a 760-amino-acid chain: Complement C2 (760 aa).

The signal sequence occupies residues 1-18 (MAPLLALFYLLQLGPGLA). 3 Sushi domains span residues 20 to 90 (LFCN…AVCK), 92 to 151 (VRCL…VCDN), and 154 to 212 (SHCP…ICRQ). Cystine bridges form between Cys22/Cys62, Cys49/Cys89, Cys94/Cys136, Cys122/Cys149, Cys156/Cys197, and Cys182/Cys210. Asn27 and Asn32 each carry an N-linked (GlcNAc...) asparagine glycan. Asn117 carries an N-linked (GlcNAc...) asparagine glycan. Residues 261 to 459 (NLYLLLDASQ…KALQQIFEHM (199 aa)) form the VWFA domain. An MIDAS-like motif motif is present at residues 267–271 (DASQS). Mg(2+) contacts are provided by Ser269 and Ser271. N-linked (GlcNAc...) asparagine glycosylation is found at Asn297 and Asn340. Position 344 (Thr344) interacts with Mg(2+). Intrachain disulfides connect Cys470/Cys590, Cys499/Cys515, Cys593/Cys609, Cys647/Cys674, and Cys685/Cys715. The region spanning 471–752 (GVGNMSANAS…LQPWLRQHLD (282 aa)) is the Peptidase S1 domain. N-linked (GlcNAc...) asparagine glycosylation is found at Asn474 and Asn478. Residues His514 and Asp570 each act as charge relay system in the active site. N-linked (GlcNAc...) asparagine glycosylation is present at Asn663. Ser689 acts as the Charge relay system in catalysis.

It belongs to the peptidase S1 family. As to quaternary structure, serine protease component of the C3 convertase, also named C4bC2b, composed of the serine protease complement C2b and complement C4b. Serine protease component of the C5 convertase, also named C4bC2bC3b, composed of the serine protease complement C2b, complement C3b, as well as complement C4b. Requires Mg(2+) as cofactor. Mn(2+) is required as a cofactor. Post-translationally, cleaved and activated by different proteases depending on the complement pathway to generate complement C2a and serine protease complement C2b chains. Cleaved and activated by C1S following activation by the classical complement system. Cleaved and activated by MASP2 following activation by the lectin complement system. Cleaved and activated by GZMK following activation by the GZMK complement system.

The protein localises to the secreted. It is found in the cell surface. It catalyses the reaction Selective cleavage of Arg-|-Ser bond in complement component C3 alpha-chain to form C3a and C3b, and Arg-|-Xaa bond in complement component C5 alpha-chain to form C5a and C5b.. In terms of biological role, precursor of the catalytic component of the C3 and C5 convertase complexes, which are part of the complement pathway, a cascade of proteins that leads to phagocytosis and breakdown of pathogens and signaling that strengthens the adaptive immune system. Component C2 is part of the classical, lectin and GZMK complement systems. Functionally, catalytic component of the complement C3 and C5 convertase complexes. Following complement activation, recruited to the surface of pathogens by complement C4b opsonin to form the C3 convertase, or C3b and C4b opsonins to form the C5 convertase. As part of the C3 convertase, cleaves and activate C3 into C3a anaphylatoxin and C3b opsonin, the next components of the complement pathways. As part of the C5 convertase, cleaves and activate C5 into C5a anaphylatoxin and C5b component of the membrane attack complex. The protein is Complement C2 of Mus musculus (Mouse).